A 416-amino-acid chain; its full sequence is Transcription termination factor Rho (416 aa).

The region spanning 51 to 121 (LIYSYGELDI…LKLIYVNGEK (71 aa)) is the Rho RNA-BD domain. ATP contacts are provided by residues 162–167 (GKGQRG), 174–179 (KAGKTT), and arginine 205.

This sequence belongs to the Rho family. As to quaternary structure, homohexamer. The homohexamer assembles into an open ring structure.

Facilitates transcription termination by a mechanism that involves Rho binding to the nascent RNA, activation of Rho's RNA-dependent ATPase activity, and release of the mRNA from the DNA template. The chain is Transcription termination factor Rho from Streptobacillus moniliformis (strain ATCC 14647 / DSM 12112 / NCTC 10651 / 9901).